Here is a 61-residue protein sequence, read N- to C-terminus: Large ribosomal subunit protein uL29 (61 aa).

The protein belongs to the universal ribosomal protein uL29 family.

The chain is Large ribosomal subunit protein uL29 from Nitratidesulfovibrio vulgaris (strain DSM 19637 / Miyazaki F) (Desulfovibrio vulgaris).